The chain runs to 607 residues: MGKYQVMKRASEVDLSTVKYKAETMKAPHLTGLSFKLFVNLLEAPLIGSLIVDYLKKDNGMTKIFRNTVIPEEPMFRPEFPSQEPEHDVVIVGEDESPIDRLETALKCLPQYDPSRSLHADPVSSFRYWKIRDYAYAYRSKLTTPLQVAKRIISIIEEFGYDKPPTPFLIRFDANEVIKQAEASTRRFEQGNPISVLDGIFVTIKDDIDCLPHPTNGGTTWLHEDRSVEKDSAVVSKLRSCGAILLGKANMHELGMGTTGNNSNYGTTRNPHDPKRYTGGSSSGSAAIVAAGLCSAALGTDGGGSVRIPSALCGITGLKTTYGRTDMTGSLCEGGTVEIIGPLASSLEDAFLVYAAILGSSSADRYNLKPSPPCFPKLLSHNGSNAIGSLRLGKYTKWFNDVSSSDISDKCEDILKLLSNNHGCKVVEIVVPELEEMRAAHVISIGSPTLSSLTPYCEAGKNSKLSYDTRTSFAIFRSFSASDYIAAQCLRRRLMEYHLNIFKDVDVIVTPTTGMTAPVIPPDALKNGETNIQVTTDLMRFVLAANLLGFPAISVPVGYDKEGLPIGLQIMGRPWAEATVLGLAAAVEELAPVTKKPAIFYDILNTN.

Active-site charge relay system residues include Lys-205 and Ser-281. A substrate-binding site is contributed by 302–305; that stretch reads GGGS. Ser-305 functions as the Acyl-ester intermediate in the catalytic mechanism.

The protein belongs to the amidase family. In terms of assembly, forms homodimers. Expressed in roots, leaves and flowers. Expressed in seedlings, flowers, roots, siliques, seeds and leaves.

It is found in the endoplasmic reticulum membrane. It localises to the cell membrane. The catalysed reaction is N-(5Z,8Z,11Z,14Z-eicosatetraenoyl)-ethanolamine + H2O = ethanolamine + (5Z,8Z,11Z,14Z)-eicosatetraenoate. The enzyme catalyses N-(9Z,12Z-octadecadienoyl)-ethanolamine + H2O = ethanolamine + (9Z,12Z)-octadecadienoate. It catalyses the reaction N-hexadecanoylethanolamine + H2O = ethanolamine + hexadecanoate. It carries out the reaction N-tetradecanoylethanolamine + H2O = tetradecanoate + ethanolamine. The catalysed reaction is N-dodecanoylethanolamine + H2O = dodecanoate + ethanolamine. Inhibited by methyl arachidonyl fluorophosphonate (MAFP). Its function is as follows. Catalyzes the hydrolysis of bioactive endogenous fatty acid amides to their corresponding acids. The hydrolysis of endogenous amidated lipids terminates their participation as lipid mediators in various signaling systems. Converts a wide range of N-acylethanolamines (NAEs) to their corresponding free fatty acids and ethanolamine. Can use oleamide as substrate, but not indole-3-acetamide, 1-naphtalene-acetamide, nicotinic acid amide or L-asparagine. Can use 2-arachidonylglycerol as substrate. Participates in the regulation of plant growth. Hydrolyzes N-dodecanoylethanolamine, which is has a growth inhibitory effect on seedling growth. Involved in plant defense signaling. Involved in abscisic acid (ABA) signaling through mechanisms that are independent of the catalytic activity. Involved in the regulation of flowering time. Catalyzes the hydrolysis of N-acyl L-homoserine lactones (AHLs), which are a class of signaling molecules produced by bacteria for quorum sensing. Accumulation of L-homoserine appears to encourage plant growth at low concentrations by stimulating transpiration, but higher concentrations inhibit growth by stimulating ethylene production. The protein is Fatty acid amide hydrolase of Arabidopsis thaliana (Mouse-ear cress).